We begin with the raw amino-acid sequence, 205 residues long: RPW8-like protein 2 (205 aa).

The region spanning 1 to 153 (MPLTEIIAGA…IMGQPIDCII (153 aa)) is the RPW8 domain. The helical transmembrane segment at 7-23 (IAGAALGLALQILHEAI) threads the bilayer. Coiled-coil stretches lie at residues 70 to 92 (EDLKHLLEKAVVLVEAYAELKRR) and 125 to 147 (ADIKDLMAKMSEMNTKLEKIMGQ).

This sequence belongs to the plant RPW8 protein family.

The protein localises to the membrane. Its function is as follows. Probable disease resistance (R) protein. The protein is RPW8-like protein 2 of Arabidopsis thaliana (Mouse-ear cress).